We begin with the raw amino-acid sequence, 202 residues long: Na(+)-translocating NADH-quinone reductase subunit E (202 aa).

Helical transmembrane passes span 11-31 (AVFI…FLAV), 39-59 (FGLG…NNLI), 81-101 (FLKF…LEMA), 114-134 (GIFL…AFMV), 144-164 (VVFG…LAAV), and 180-200 (LGIT…FSGV).

It belongs to the NqrDE/RnfAE family. Composed of six subunits; NqrA, NqrB, NqrC, NqrD, NqrE and NqrF.

The protein localises to the cell inner membrane. The enzyme catalyses a ubiquinone + n Na(+)(in) + NADH + H(+) = a ubiquinol + n Na(+)(out) + NAD(+). In terms of biological role, NQR complex catalyzes the reduction of ubiquinone-1 to ubiquinol by two successive reactions, coupled with the transport of Na(+) ions from the cytoplasm to the periplasm. NqrA to NqrE are probably involved in the second step, the conversion of ubisemiquinone to ubiquinol. The chain is Na(+)-translocating NADH-quinone reductase subunit E from Idiomarina loihiensis (strain ATCC BAA-735 / DSM 15497 / L2-TR).